Consider the following 124-residue polypeptide: Small ribosomal subunit protein bS6 (124 aa).

Belongs to the bacterial ribosomal protein bS6 family.

In terms of biological role, binds together with bS18 to 16S ribosomal RNA. The chain is Small ribosomal subunit protein bS6 from Actinobacillus pleuropneumoniae serotype 5b (strain L20).